The sequence spans 139 residues: ATP synthase epsilon chain (139 aa).

This sequence belongs to the ATPase epsilon chain family. In terms of assembly, F-type ATPases have 2 components, CF(1) - the catalytic core - and CF(0) - the membrane proton channel. CF(1) has five subunits: alpha(3), beta(3), gamma(1), delta(1), epsilon(1). CF(0) has three main subunits: a, b and c.

It is found in the cell inner membrane. Produces ATP from ADP in the presence of a proton gradient across the membrane. The chain is ATP synthase epsilon chain from Shigella boydii serotype 18 (strain CDC 3083-94 / BS512).